The chain runs to 504 residues: Probable ergothioneine transporter EgtUBC (504 aa).

In terms of domain architecture, ABC transmembrane type-1 spans 19–198; sequence LVQHIQISFV…LLAILFDFLL (180 aa). 6 consecutive transmembrane segments (helical) span residues 25 to 44, 57 to 74, 81 to 97, 146 to 170, 179 to 198, and 210 to 229; these read ISFVSLFIAVLIALPLGIYL, VAAIFQTIPSLALLGLLI, IVPAIIALVIYALLPIL, MVLIIGTATLAALIGAGGLGDLILL, LILLGAIPAALLAILFDFLL, and IITISAGILLTAAIIVVPYF. The tract at residues 231–504 is ergothioneine binding domain; it reads SDKKEITIAG…DYLKDQGIIK (274 aa).

It in the N-terminal section; belongs to the binding-protein-dependent transport system permease family. In the C-terminal section; belongs to the OsmX family. In terms of assembly, the complex is probably composed of at least an ATP-binding protein (EgtUA) and a transmembrane protein (EgtUBC).

Its subcellular location is the membrane. In terms of biological role, part of an ABC transporter complex EgtU required for the uptake of ergothioneine (EGT), a natural low-molecular weight (LMW) thiol antioxidant. Responsible for the translocation of the substrate across the membrane. Also contains a C-terminal periplasmic solute-binding domain (SBD) which binds to EGT with sub-micromolar affinity. Does not bind glycine betaine, carnitine, choline, proline, or cholate. Plays a role in bile acid tolerance. Dispensable for choline uptake. Probably not involved in betaine, carnitine or choline mediated osmo- or chill tolerance. Plays a role in enhancing virulence in mice. The polypeptide is Probable ergothioneine transporter EgtUBC (Listeria monocytogenes serovar 1/2a (strain ATCC BAA-679 / EGD-e)).